The primary structure comprises 239 residues: Ribonuclease PH (239 aa).

Phosphate-binding positions include Arg86 and 124-126; that span reads GTR.

It belongs to the RNase PH family. In terms of assembly, homohexameric ring arranged as a trimer of dimers.

It catalyses the reaction tRNA(n+1) + phosphate = tRNA(n) + a ribonucleoside 5'-diphosphate. In terms of biological role, phosphorolytic 3'-5' exoribonuclease that plays an important role in tRNA 3'-end maturation. Removes nucleotide residues following the 3'-CCA terminus of tRNAs; can also add nucleotides to the ends of RNA molecules by using nucleoside diphosphates as substrates, but this may not be physiologically important. Probably plays a role in initiation of 16S rRNA degradation (leading to ribosome degradation) during starvation. In Cupriavidus necator (strain ATCC 17699 / DSM 428 / KCTC 22496 / NCIMB 10442 / H16 / Stanier 337) (Ralstonia eutropha), this protein is Ribonuclease PH.